A 592-amino-acid chain; its full sequence is Peroxisomal targeting signal receptor (592 aa).

Residue Cys10 forms a Glycyl cysteine thioester (Cys-Gly) (interchain with G-Cter in ubiquitin) linkage. The segment at 11 to 33 is amphipathic helix 1 (AH1); it reads SVNGNAVAQFNKHTQQDRSLQQQ. Lys22 participates in a covalent cross-link: Glycyl lysine isopeptide (Lys-Gly) (interchain with G-Cter in ubiquitin). Over residues 22-46 the composition is skewed to polar residues; sequence KHTQQDRSLQQQVANQHGNVAQNQG. The segment at 22–49 is disordered; the sequence is KHTQQDRSLQQQVANQHGNVAQNQGFKK. An amphipathic helix 2 (AH2) region spans residues 58–76; the sequence is RANLDQFMNNGAPQNSFQF. 3 short sequence motifs (wxxxF/Y motif) span residues 100–104, 128–132, and 185–189; these read WSQDF, WASEF, and WENQF. The segment at 223–239 is amphipathic helix 4 (AH4); the sequence is FQEVWDSLNSESFENDF. A WxxxF/Y motif 4 motif is present at residues 262-266; it reads WEKDF. TPR repeat units lie at residues 295-329, 330-363, 440-473, 475-507, and 509-541; these read DQDP…DENH, VDAW…HPEN, ADVQ…RPDD, ILWN…KPTF, and RARY…HQVE.

Belongs to the peroxisomal targeting signal receptor family. Interacts (via WxxxF/Y and LVxEF motifs) with PEX14; promoting translocation through the PEX13-PEX14 docking complex. In terms of processing, monoubiquitinated at Cys-10 by PEX2 during PEX5 passage through the retrotranslocation channel: monoubiquitination acts as a signal for PEX5 extraction and is required for proper export from peroxisomes and recycling. When PEX5 recycling is compromised, polyubiquitinated at Lys-22 by PEX10 during its passage through the retrotranslocation channel, leading to its degradation.

It is found in the cytoplasm. The protein resides in the cytosol. The protein localises to the peroxisome matrix. Its function is as follows. Receptor that mediates peroxisomal import of proteins containing a C-terminal PTS1-type tripeptide peroxisomal targeting signal (SKL-type). Binds to cargo proteins containing a PTS1 peroxisomal targeting signal in the cytosol, and translocates them into the peroxisome matrix by passing through the PEX13-PEX14 docking complex along with cargo proteins. PEX5 receptor is then retrotranslocated into the cytosol, leading to release of bound cargo in the peroxisome matrix, and reset for a subsequent peroxisome import cycle. The polypeptide is Peroxisomal targeting signal receptor (PEX5) (Candida albicans (strain SC5314 / ATCC MYA-2876) (Yeast)).